The sequence spans 195 residues: Thymidine kinase (195 aa).

ATP is bound by residues 15 to 22 and 91 to 94; these read GSMFSGKT and DEAN. E92 (proton acceptor) is an active-site residue. Zn(2+) is bound by residues C148, C151, C186, and C189.

Belongs to the thymidine kinase family. In terms of assembly, homotetramer.

Its subcellular location is the cytoplasm. The enzyme catalyses thymidine + ATP = dTMP + ADP + H(+). This is Thymidine kinase from Halobacterium salinarum (strain ATCC 29341 / DSM 671 / R1).